Consider the following 1938-residue polypeptide: Autophagy-related protein 2 homolog A (1938 aa).

The Chorein N-terminal domain occupies Glu14–Pro111. A phosphoserine mark is found at Ser765, Ser878, Ser892, Ser894, Ser1266, Ser1301, and Ser1309. The interval Asp1242–Pro1272 is disordered. A disordered region spans residues Leu1315–Ser1359. Residues Glu1343–Ser1359 show a composition bias toward acidic residues. The WIPI-interacting stretch occupies residues Asp1358–Asp1404. Position 1402 is a phosphoserine (Ser1402). Disordered regions lie at residues Pro1438–Arg1476 and Gly1614–Pro1657. The span at Thr1446–Pro1464 shows a compositional bias: low complexity.

Belongs to the ATG2 family. Interacts with ATG9A (via C-terminus). Interacts (via WIPI-interacting region) with WDR45B/WIPI3. Interacts (via WIPI-interacting region) with WDR45/WIPI4. Interacts with TMEM41B. Interacts with VMP1.

The protein resides in the preautophagosomal structure membrane. It is found in the lipid droplet. Its subcellular location is the endoplasmic reticulum membrane. It catalyses the reaction a 1,2-diacyl-sn-glycero-3-phospho-L-serine(in) = a 1,2-diacyl-sn-glycero-3-phospho-L-serine(out). It carries out the reaction a 1,2-diacyl-sn-glycero-3-phosphoethanolamine(in) = a 1,2-diacyl-sn-glycero-3-phosphoethanolamine(out). In terms of biological role, lipid transfer protein involved in autophagosome assembly. Tethers the edge of the isolation membrane (IM) to the endoplasmic reticulum (ER) and mediates direct lipid transfer from ER to IM for IM expansion. Binds to the ER exit site (ERES), which is the membrane source for autophagosome formation, and extracts phospholipids from the membrane source and transfers them to ATG9 (ATG9A or ATG9B) to the IM for membrane expansion. Lipid transfer activity is enhanced by WIPI1 and WDR45/WIPI4, which promote ATG2A-association with phosphatidylinositol 3-monophosphate (PI3P)-containing membranes. Also regulates lipid droplets morphology and distribution within the cell. In Homo sapiens (Human), this protein is Autophagy-related protein 2 homolog A.